The primary structure comprises 540 residues: MSKQIEFNETARRAMEIGVDKLADAVKVTLGPRGRNVVLAKSWGGPTVTNDGVTIAREIDLEDPFENLGAQLVKSVATKTNDVAGDGTTTATVLAQALVRAGLRNVAAGANPIALGAGISKAADAVSEALLAAATPVDDKSGIAQVATVSSRDEQIGELVGEAMTKVGHDGVVTVEESSTLNTELEVTEGVGFDKGFISAYFVTDFDSQEAVLEDALVLLHREKVSSLPDLLPLLEKVAEAGKPLLIIAEDVEGEALSTLVVNAIRKTLKAVAVKAPFFGDRRKAFLDDLAVVTGGQVINPDVGLVLREVGLDVLGTARRVVVTKDSTVIVDGGGSADAIADRAKQLRAEIEATDSDWDREKLEERLAKLAGGVAVIKVGAATETDLKKRKEAVEDAVSAAKAAVEEGIVTGGGAALVQARKALDSLRGSVSGDEALGVEVFNSALSAPLYWIATNAGLDGSVVVNKVSELPAGQGFNAATLEFGDLLADGVVDPVKVTRSAVLNAASVARMVLTTETAIVDKPAEEEDHGHGHHHGHAH.

ATP-binding positions include 29–32, 86–90, Gly-413, 478–480, and Asp-494; these read TLGP, DGTTT, and NAA.

This sequence belongs to the chaperonin (HSP60) family. In terms of assembly, forms a cylinder of 14 subunits composed of two heptameric rings stacked back-to-back. Interacts with the co-chaperonin GroES.

Its subcellular location is the cytoplasm. It catalyses the reaction ATP + H2O + a folded polypeptide = ADP + phosphate + an unfolded polypeptide.. Its function is as follows. Together with its co-chaperonin GroES, plays an essential role in assisting protein folding. The GroEL-GroES system forms a nano-cage that allows encapsulation of the non-native substrate proteins and provides a physical environment optimized to promote and accelerate protein folding. This is Chaperonin GroEL 1 from Mycobacterium sp. (strain JLS).